Here is a 156-residue protein sequence, read N- to C-terminus: Small ribosomal subunit protein uS7 (156 aa).

The protein belongs to the universal ribosomal protein uS7 family. Part of the 30S ribosomal subunit. Contacts proteins S9 and S11.

Functionally, one of the primary rRNA binding proteins, it binds directly to 16S rRNA where it nucleates assembly of the head domain of the 30S subunit. Is located at the subunit interface close to the decoding center, probably blocks exit of the E-site tRNA. The chain is Small ribosomal subunit protein uS7 from Rhodococcus erythropolis (strain PR4 / NBRC 100887).